A 1334-amino-acid polypeptide reads, in one-letter code: DNA-directed RNA polymerase subunit beta' (1334 aa).

4 residues coordinate Zn(2+): Cys-213, Cys-284, Cys-291, and Cys-294. Residues 1299–1308 (SSRGSSRFSR) are compositionally biased toward low complexity. A disordered region spans residues 1299–1334 (SSRGSSRFSRQPISDRWSEADEEGEEDDFEEDYEEE). Positions 1318–1334 (ADEEGEEDDFEEDYEEE) are enriched in acidic residues.

This sequence belongs to the RNA polymerase beta' chain family. RpoC2 subfamily. In terms of assembly, in cyanobacteria the RNAP catalytic core is composed of 2 alpha, 1 beta, 1 beta', 1 gamma and 1 omega subunit. When a sigma factor is associated with the core the holoenzyme is formed, which can initiate transcription. The cofactor is Zn(2+).

The catalysed reaction is RNA(n) + a ribonucleoside 5'-triphosphate = RNA(n+1) + diphosphate. Functionally, DNA-dependent RNA polymerase catalyzes the transcription of DNA into RNA using the four ribonucleoside triphosphates as substrates. This chain is DNA-directed RNA polymerase subunit beta', found in Microcystis aeruginosa (strain NIES-843 / IAM M-2473).